The sequence spans 253 residues: MNILLSNDDGYHAEGIQTLATRLREAGHCVTVIAPDRNRSAASSCLTLMEPIRVHQLGTFDYSVIAGTPADCVHLALNGLFETSFDLVVSGINHGANLGDDVVYSGTVAAALEGRHLRLPSLAVSLVGKQSEGHLFGNNHFETAAQVVLDVLPKLVDMALPRQILNINVPDLPYSAIKGMLVTRLGQRSPSAEILKSQDPRGSTIYWLGENGSAIDNGEGTDFYALAHDYVSITPIHADMTAHHAIKVLSEML.

Residues Asp-8, Asp-9, Ser-40, and Asn-93 each contribute to the a divalent metal cation site.

This sequence belongs to the SurE nucleotidase family. It depends on a divalent metal cation as a cofactor.

The protein localises to the cytoplasm. It carries out the reaction a ribonucleoside 5'-phosphate + H2O = a ribonucleoside + phosphate. In terms of biological role, nucleotidase that shows phosphatase activity on nucleoside 5'-monophosphates. The polypeptide is 5'-nucleotidase SurE (Haemophilus ducreyi (strain 35000HP / ATCC 700724)).